A 293-amino-acid chain; its full sequence is Delta(3,5)-Delta(2,4)-dienoyl-CoA isomerase, mitochondrial (293 aa).

Substrate-binding positions include 84–88 (AGLNL) and Gly-142.

Belongs to the enoyl-CoA hydratase/isomerase family.

The protein resides in the mitochondrion. It catalyses the reaction (3E,5Z)-octadienoyl-CoA = (2E,4E)-octadienoyl-CoA. The enzyme catalyses (3E,5Z,8Z,11Z,14Z)-eicosapentaenoyl-CoA = (2E,4E,8Z,11Z,14Z)-eicosapentaenoyl-CoA. The protein operates within lipid metabolism; fatty acid beta-oxidation. Its function is as follows. Isomerization of 3-trans,5-cis-dienoyl-CoA to 2-trans,4-trans-dienoyl-CoA. This is Delta(3,5)-Delta(2,4)-dienoyl-CoA isomerase, mitochondrial (ech1) from Dictyostelium discoideum (Social amoeba).